A 469-amino-acid polypeptide reads, in one-letter code: UDP-N-acetylmuramate--L-alanine ligase (469 aa).

112 to 118 (GTHGKTT) lines the ATP pocket.

It belongs to the MurCDEF family.

It is found in the cytoplasm. It catalyses the reaction UDP-N-acetyl-alpha-D-muramate + L-alanine + ATP = UDP-N-acetyl-alpha-D-muramoyl-L-alanine + ADP + phosphate + H(+). It functions in the pathway cell wall biogenesis; peptidoglycan biosynthesis. Its function is as follows. Cell wall formation. This is UDP-N-acetylmuramate--L-alanine ligase from Laribacter hongkongensis (strain HLHK9).